A 424-amino-acid chain; its full sequence is Serine--tRNA ligase (424 aa).

Residue T233–E235 coordinates L-serine. Residues R264–E266 and V280 each bind ATP. E287 is an L-serine binding site. Position 351–354 (E351–S354) interacts with ATP. An L-serine-binding site is contributed by S386.

The protein belongs to the class-II aminoacyl-tRNA synthetase family. Type-1 seryl-tRNA synthetase subfamily. In terms of assembly, homodimer. The tRNA molecule binds across the dimer.

It is found in the cytoplasm. It carries out the reaction tRNA(Ser) + L-serine + ATP = L-seryl-tRNA(Ser) + AMP + diphosphate + H(+). The catalysed reaction is tRNA(Sec) + L-serine + ATP = L-seryl-tRNA(Sec) + AMP + diphosphate + H(+). The protein operates within aminoacyl-tRNA biosynthesis; selenocysteinyl-tRNA(Sec) biosynthesis; L-seryl-tRNA(Sec) from L-serine and tRNA(Sec): step 1/1. Functionally, catalyzes the attachment of serine to tRNA(Ser). Is also able to aminoacylate tRNA(Sec) with serine, to form the misacylated tRNA L-seryl-tRNA(Sec), which will be further converted into selenocysteinyl-tRNA(Sec). This is Serine--tRNA ligase from Kosmotoga olearia (strain ATCC BAA-1733 / DSM 21960 / TBF 19.5.1).